The following is a 950-amino-acid chain: Leucine--tRNA ligase (950 aa).

A 'HIGH' region motif is present at residues 72–83 (PYPSGEGLHVGH). Residues 722-726 (KIGKS) carry the 'KMSKS' region motif. Residue K725 participates in ATP binding.

It belongs to the class-I aminoacyl-tRNA synthetase family.

It is found in the cytoplasm. It carries out the reaction tRNA(Leu) + L-leucine + ATP = L-leucyl-tRNA(Leu) + AMP + diphosphate. The chain is Leucine--tRNA ligase from Mycobacterium sp. (strain KMS).